Consider the following 671-residue polypeptide: UvrABC system protein C (671 aa).

The 80-residue stretch at 16 to 95 folds into the GIY-YIG domain; sequence TTPGVYRFRD…IKEFKPRFNV (80 aa). The UVR domain maps to 207-242; it reads KRFISRLEKDMAAAVAELDYERAAGLRDDIIALRKV.

This sequence belongs to the UvrC family. In terms of assembly, interacts with UvrB in an incision complex.

The protein localises to the cytoplasm. In terms of biological role, the UvrABC repair system catalyzes the recognition and processing of DNA lesions. UvrC both incises the 5' and 3' sides of the lesion. The N-terminal half is responsible for the 3' incision and the C-terminal half is responsible for the 5' incision. The polypeptide is UvrABC system protein C (Paenarthrobacter aurescens (strain TC1)).